Consider the following 184-residue polypeptide: Oligoribonuclease (184 aa).

An Exonuclease domain is found at 7-170 (LIWIDLEMTG…DDIRESVAEL (164 aa)). The active site involves Tyr128.

This sequence belongs to the oligoribonuclease family.

The protein resides in the cytoplasm. Its function is as follows. 3'-to-5' exoribonuclease specific for small oligoribonucleotides. This Baumannia cicadellinicola subsp. Homalodisca coagulata protein is Oligoribonuclease.